A 999-amino-acid polypeptide reads, in one-letter code: Sarcoplasmic/endoplasmic reticulum calcium ATPase 3 (999 aa).

Met1 bears the N-acetylmethionine mark. At 1 to 48 (MEAAHLLPAADVLRHFSVTAEGGLSPAQVTGARERYGPNELPSEEGKS) the chain is on the cytoplasmic side. Position 17 is a phosphoserine (Ser17). Thr19 is modified (phosphothreonine). Ser25 carries the phosphoserine modification. Residues 49–69 (LWELVLEQFEDLLVRILLLAA) traverse the membrane as a helical segment. Over 70–89 (LVSFVLAWFEEGEETTTAFV) the chain is Lumenal. The chain crosses the membrane as a helical span at residues 90 to 110 (EPLVIMLILVANAIVGVWQER). The Cytoplasmic portion of the chain corresponds to 111–253 (NAESAIEALK…PERTPLQRKL (143 aa)). A helical transmembrane segment spans residues 254–273 (DEFGRQLSHAISVICVAVWV). The Lumenal segment spans residues 274–295 (INIGHFADPAHGGSWLRGAVYY). A helical membrane pass occupies residues 296–313 (FKIAVALAVAAIPEGLPA). Ca(2+) contacts are provided by Val304, Ala305, Ile307, and Glu309. At 314–757 (VITTCLALGT…EEGRAIYSNM (444 aa)) the chain is on the cytoplasmic side. The active-site 4-aspartylphosphate intermediate is Asp351. Mg(2+) is bound by residues Asp351 and Thr353. Residue Thr353 participates in ATP binding. The interaction with phospholamban 1 stretch occupies residues 370–400 (AEADAGSCLLHEFTISGTTYTPEGEVRQGDQ). Thr415 bears the Phosphothreonine mark. 7 residues coordinate ATP: Glu442, Arg489, Lys515, Arg560, Thr625, Gly626, and Asp627. Ser662 carries the post-translational modification Phosphoserine. ATP-binding residues include Arg678 and Lys684. A Mg(2+)-binding site is contributed by Asp703. Residue Asn706 coordinates ATP. Residues 758 to 777 (KQFIRYLISSNVGEVVCIFL) form a helical membrane-spanning segment. Ca(2+) contacts are provided by Asn768 and Glu771. The Lumenal segment spans residues 778 to 787 (TAILGLPEAL). The chain crosses the membrane as a helical span at residues 788 to 808 (IPVQLLWVNLVTDGLPATALG). The interaction with phospholamban 2 stretch occupies residues 788 to 808 (IPVQLLWVNLVTDGLPATALG). Ca(2+) is bound by residues Asn796, Thr799, and Asp800. Residues 809 to 828 (FNPPDLDIMEKLPRSPREAL) are Cytoplasmic-facing. Residues 829-851 (ISGWLFFRYLAIGVYVGLATVAA) traverse the membrane as a helical segment. Residues 852-897 (ATWWFVYDAEGPHINFYQLRNFLKCSEDNPLFAGIDCEVFESRFPT) lie on the Lumenal side of the membrane. A helical transmembrane segment spans residues 898–917 (TMALSVLVTIEMCNALNSVS). Residue Glu908 coordinates Ca(2+). Residues 918-930 (ENQSLLRMPPWMN) lie on the Cytoplasmic side of the membrane. Residues 931-949 (PWLLVAVAMSMALHFLILL) form a helical membrane-spanning segment. Residues 950–964 (VPPLPLIFQVTPLSG) lie on the Lumenal side of the membrane. The chain crosses the membrane as a helical span at residues 965–985 (RQWVVVLQISLPVILLDEALK). At 986 to 999 (YLSRNHMHEEMSQK) the chain is on the cytoplasmic side.

This sequence belongs to the cation transport ATPase (P-type) (TC 3.A.3) family. Type IIA subfamily. In terms of assembly, interacts with sarcolipin (SLN). Interacts with phospholamban (PLN). Interacts with myoregulin (MRLN). Interacts with DWORF. Interacts with VMP1. Interacts with TUNAR; the interaction occurs at low levels in low glucose conditions and is increased by high glucose levels. It depends on Mg(2+) as a cofactor. Found in most tissues. Most abundant in thymus, trachea, salivary gland, spleen, bone marrow, lymph node, peripheral leukocytes, pancreas and colon. Also detected in fetal tissues. Expressed in cell lineages of hematopoietic, epithelial, or embryonic origin and also expressed in several cancer cell lines.

It is found in the nucleus membrane. Its subcellular location is the endoplasmic reticulum membrane. The protein resides in the sarcoplasmic reticulum membrane. The enzyme catalyses Ca(2+)(in) + ATP + H2O = Ca(2+)(out) + ADP + phosphate + H(+). Its activity is regulated as follows. Inhibited by sarcolipin (SLN), phospholamban (PLN) and myoregulin (MRLN). Enhanced by DWORF; DWORF increases activity by displacing sarcolipin (SLN), phospholamban (PLN) and myoregulin (MRLN). Its function is as follows. This magnesium-dependent enzyme catalyzes the hydrolysis of ATP coupled with the transport of calcium. Transports calcium ions from the cytosol into the sarcoplasmic/endoplasmic reticulum lumen. Contributes to calcium sequestration involved in muscular excitation/contraction. The polypeptide is Sarcoplasmic/endoplasmic reticulum calcium ATPase 3 (Homo sapiens (Human)).